We begin with the raw amino-acid sequence, 604 residues long: Sulfite reductase [NADPH] flavoprotein alpha-component (604 aa).

The Flavodoxin-like domain maps to 66 to 204; it reads VTVLSASQTG…AADGWTGRIV (139 aa). FMN-binding positions include 72–77, 119–122, and 155–164; these read SQTGNA, STQG, and LGDSSYPNFC. The interval 212–231 is disordered; sequence AKNRATPAPQTTPPAGLQTA. Residues 216–231 show a composition bias toward low complexity; it reads ATPAPQTTPPAGLQTA. An FAD-binding FR-type domain is found at 239-453; that stretch reads ADPFPAALLA…VERNDGFRLP (215 aa). FAD is bound by residues threonine 327, glutamine 361, 391-394, 409-411, and 424-427; these read RLYS, TVG, and GGAS. NADP(+) is bound by residues 524-525, 530-534, and aspartate 566; these read SR and KIYVQ. Tyrosine 604 provides a ligand contact to FAD.

It belongs to the NADPH-dependent sulphite reductase flavoprotein subunit CysJ family. The protein in the N-terminal section; belongs to the flavodoxin family. This sequence in the C-terminal section; belongs to the flavoprotein pyridine nucleotide cytochrome reductase family. As to quaternary structure, alpha(8)-beta(8). The alpha component is a flavoprotein, the beta component is a hemoprotein. It depends on FAD as a cofactor. Requires FMN as cofactor.

It catalyses the reaction hydrogen sulfide + 3 NADP(+) + 3 H2O = sulfite + 3 NADPH + 4 H(+). It participates in sulfur metabolism; hydrogen sulfide biosynthesis; hydrogen sulfide from sulfite (NADPH route): step 1/1. Component of the sulfite reductase complex that catalyzes the 6-electron reduction of sulfite to sulfide. This is one of several activities required for the biosynthesis of L-cysteine from sulfate. The flavoprotein component catalyzes the electron flow from NADPH -&gt; FAD -&gt; FMN to the hemoprotein component. The polypeptide is Sulfite reductase [NADPH] flavoprotein alpha-component (Neisseria meningitidis serogroup C / serotype 2a (strain ATCC 700532 / DSM 15464 / FAM18)).